The primary structure comprises 117 residues: Acidic phospholipase A2 PA-1G (117 aa).

Cystine bridges form between Cys11–Cys71, Cys27–Cys117, Cys29–Cys45, Cys44–Cys98, Cys51–Cys91, Cys60–Cys84, and Cys78–Cys89. Positions 28, 30, and 32 each coordinate Ca(2+). His48 is an active-site residue. Asp49 is a binding site for Ca(2+). Asp92 is an active-site residue.

Belongs to the phospholipase A2 family. Group I subfamily. D49 sub-subfamily. Ca(2+) serves as cofactor. As to expression, expressed by the venom gland.

The protein localises to the secreted. It catalyses the reaction a 1,2-diacyl-sn-glycero-3-phosphocholine + H2O = a 1-acyl-sn-glycero-3-phosphocholine + a fatty acid + H(+). In terms of biological role, PLA2 catalyzes the calcium-dependent hydrolysis of the 2-acyl groups in 3-sn-phosphoglycerides. This chain is Acidic phospholipase A2 PA-1G, found in Pseudechis australis (Mulga snake).